Consider the following 142-residue polypeptide: Large ribosomal subunit protein uL16 (142 aa).

Belongs to the universal ribosomal protein uL16 family. As to quaternary structure, part of the 50S ribosomal subunit.

Binds 23S rRNA and is also seen to make contacts with the A and possibly P site tRNAs. The chain is Large ribosomal subunit protein uL16 from Thermosipho melanesiensis (strain DSM 12029 / CIP 104789 / BI429).